The following is a 1342-amino-acid chain: DNA-directed RNA polymerase subunit beta (1342 aa).

Belongs to the RNA polymerase beta chain family. As to quaternary structure, the RNAP catalytic core consists of 2 alpha, 1 beta, 1 beta' and 1 omega subunit. When a sigma factor is associated with the core the holoenzyme is formed, which can initiate transcription.

It catalyses the reaction RNA(n) + a ribonucleoside 5'-triphosphate = RNA(n+1) + diphosphate. Its function is as follows. DNA-dependent RNA polymerase catalyzes the transcription of DNA into RNA using the four ribonucleoside triphosphates as substrates. The protein is DNA-directed RNA polymerase subunit beta of Photorhabdus laumondii subsp. laumondii (strain DSM 15139 / CIP 105565 / TT01) (Photorhabdus luminescens subsp. laumondii).